The sequence spans 422 residues: Hexuronate transporter (422 aa).

A run of 11 helical transmembrane segments spans residues 9–29 (VILFLFLAGVINYLDRSALSI), 45–65 (MGLIFSSFSIGYAIFNFLGGV), 82–102 (VWSLFSGAVALAFGFVSLLII), 141–161 (TPLGGAISGPIVGMIAVAFSW), 163–183 (VSFVLIMIIGLIWAVLWFKFV), 219–239 (LFTAFAFFAYNYILFFFLTWF), 256–276 (VITVIPWILGFIGLAAGGFVS), 294–314 (VVLVTCLFSSAVLIGFAGLVA), 321–341 (TLVALSVFFLYLTGAIYWAVI), 356–376 (FMHFLANTAGIIGPALTGFIV), and 381–401 (TFSGAFLLAGGLAVFASLAVI).

The protein belongs to the major facilitator superfamily. Phthalate permease family.

The protein localises to the cell membrane. It catalyses the reaction aldehydo-D-glucuronate(in) + H(+)(in) = aldehydo-D-glucuronate(out) + H(+)(out). The catalysed reaction is aldehydo-D-galacturonate(out) + H(+)(out) = aldehydo-D-galacturonate(in) + H(+)(in). Its function is as follows. Transport of aldohexuronates such as D-glucuronate and D-galacturonate. This is Hexuronate transporter from Bacillus subtilis (strain 168).